The sequence spans 671 residues: DNA ligase (671 aa).

NAD(+) is bound by residues Asp34–Asp38, Ser83–Leu84, and Glu117. Lys119 acts as the N6-AMP-lysine intermediate in catalysis. Arg140, Glu177, Lys293, and Lys317 together coordinate NAD(+). Residues Cys411, Cys414, Cys429, and Cys434 each coordinate Zn(2+). The 81-residue stretch at Lys591 to Gln671 folds into the BRCT domain.

This sequence belongs to the NAD-dependent DNA ligase family. LigA subfamily. The cofactor is Mg(2+). It depends on Mn(2+) as a cofactor.

The enzyme catalyses NAD(+) + (deoxyribonucleotide)n-3'-hydroxyl + 5'-phospho-(deoxyribonucleotide)m = (deoxyribonucleotide)n+m + AMP + beta-nicotinamide D-nucleotide.. In terms of biological role, DNA ligase that catalyzes the formation of phosphodiester linkages between 5'-phosphoryl and 3'-hydroxyl groups in double-stranded DNA using NAD as a coenzyme and as the energy source for the reaction. It is essential for DNA replication and repair of damaged DNA. In Geobacter metallireducens (strain ATCC 53774 / DSM 7210 / GS-15), this protein is DNA ligase.